The following is a 5801-amino-acid chain: uncharacterized protein (5801 aa).

Disordered stretches follow at residues 1114-1136, 1827-1846, 2040-2109, 3351-3392, 5134-5168, 5478-5573, and 5600-5638; these read DDDN…NKKI, KDRS…SINN, NNGE…SPLF, EKSN…NNSG, DNNN…SESD, ISDP…EDII, and HDKD…ETPG. Low complexity-rich tracts occupy residues 1118–1134, 1831–1846, 2048–2096, 3353–3392, and 5135–5153; these read NNSN…NNNK, SSSS…SINN, QQLQ…QQQQ, SNNN…NNSG, and NNNN…NNNN. A compositionally biased stretch (acidic residues) spans 5496–5573; sequence DNEEEEEDDD…EDEDEDEDII (78 aa). Over residues 5617–5629 the composition is skewed to basic and acidic residues; it reads QQPEKPQQPEKPQ.

This is an uncharacterized protein from Dictyostelium discoideum (Social amoeba).